Reading from the N-terminus, the 574-residue chain is Galectin-3-binding protein (574 aa).

An N-terminal signal peptide occupies residues 1–18 (MALLWLLSVFLLVPGTQG). The region spanning 24-124 (MRLVNGASAS…HEKDAGVVCS (101 aa)) is the SRCR domain. Disulfide bonds link C49-C113, C62-C123, and C93-C103. N-linked (GlcNAc...) asparagine glycosylation is found at N69, N96, N102, and N125. The BTB domain occupies 153-221 (CDLFIQVTGQ…FYSRRIEVSM (69 aa)). A BACK domain is found at 260–360 (PLELYEYAQA…MLPQELFELQ (101 aa)). N-linked (GlcNAc...) asparagine glycans are attached at residues N362, N398, N540, and N569.

In terms of assembly, homodimers and homomultimers. The multimers form ring-like structures with a diameter of 30-40 nm. Binds LGALS1 and LGALS3. Binds ITGB1, COL4A1, COL5A1, COL6A1, FN1 and NID. The unglycosylated form interacts with PDE4DIP; this interaction, which is PDE4DIP isoform-specific, may connect a pericentrosomal complex to the gamma-tubulin ring complex (gamma-TuRC) to promote microtubule assembly and acetylation. In terms of tissue distribution, detected in thyroid (at protein level).

It is found in the secreted. Its subcellular location is the extracellular space. The protein resides in the extracellular matrix. Functionally, promotes integrin-mediated cell adhesion. May stimulate host defense against viruses and tumor cells. This Rattus norvegicus (Rat) protein is Galectin-3-binding protein (Lgals3bp).